Consider the following 483-residue polypeptide: Probable cytosol aminopeptidase (483 aa).

Lys252 and Asp257 together coordinate Mn(2+). Lys264 is a catalytic residue. Residues Asp275, Asp334, and Glu336 each coordinate Mn(2+). Residue Arg338 is part of the active site.

Belongs to the peptidase M17 family. The cofactor is Mn(2+).

The protein resides in the cytoplasm. It carries out the reaction Release of an N-terminal amino acid, Xaa-|-Yaa-, in which Xaa is preferably Leu, but may be other amino acids including Pro although not Arg or Lys, and Yaa may be Pro. Amino acid amides and methyl esters are also readily hydrolyzed, but rates on arylamides are exceedingly low.. It catalyses the reaction Release of an N-terminal amino acid, preferentially leucine, but not glutamic or aspartic acids.. In terms of biological role, presumably involved in the processing and regular turnover of intracellular proteins. Catalyzes the removal of unsubstituted N-terminal amino acids from various peptides. The polypeptide is Probable cytosol aminopeptidase (Legionella pneumophila (strain Paris)).